Here is a 525-residue protein sequence, read N- to C-terminus: Glucose-6-phosphate isomerase (525 aa).

Glutamate 347 (proton donor) is an active-site residue. Active-site residues include histidine 378 and lysine 493.

This sequence belongs to the GPI family.

Its subcellular location is the cytoplasm. It carries out the reaction alpha-D-glucose 6-phosphate = beta-D-fructose 6-phosphate. The protein operates within carbohydrate biosynthesis; gluconeogenesis. Its pathway is carbohydrate degradation; glycolysis; D-glyceraldehyde 3-phosphate and glycerone phosphate from D-glucose: step 2/4. Functionally, catalyzes the reversible isomerization of glucose-6-phosphate to fructose-6-phosphate. This chain is Glucose-6-phosphate isomerase, found in Chlamydia trachomatis serovar D (strain ATCC VR-885 / DSM 19411 / UW-3/Cx).